The chain runs to 156 residues: Putative pre-16S rRNA nuclease (156 aa).

Belongs to the YqgF nuclease family.

Its subcellular location is the cytoplasm. Could be a nuclease involved in processing of the 5'-end of pre-16S rRNA. The protein is Putative pre-16S rRNA nuclease of Ehrlichia ruminantium (strain Gardel).